Consider the following 264-residue polypeptide: 5'-nucleotidase SurE (264 aa).

Residues aspartate 12, aspartate 13, serine 43, and asparagine 98 each contribute to the a divalent metal cation site.

It belongs to the SurE nucleotidase family. A divalent metal cation serves as cofactor.

It localises to the cytoplasm. It carries out the reaction a ribonucleoside 5'-phosphate + H2O = a ribonucleoside + phosphate. In terms of biological role, nucleotidase that shows phosphatase activity on nucleoside 5'-monophosphates. The polypeptide is 5'-nucleotidase SurE (Sulfurovum sp. (strain NBC37-1)).